Consider the following 1305-residue polypeptide: Myosin-IIIb (1305 aa).

The Protein kinase domain occupies 15–281 (WEIIETIGKG…VTHLLDHPFI (267 aa)). ATP is bound by residues 21–29 (IGKGTYGKV) and Lys44. Residue Asp144 is the Proton acceptor of the active site. Residues 331–1046 (CLEDDLVNLE…HVEQLNLLLR (716 aa)) enclose the Myosin motor domain. The tract at residues 927 to 949 (LMDLLSKMVVGQPHFIRCIKPND) is actin-binding. IQ domains follow at residues 1048-1077 (VMGRVVMLQAYTKGWLGARRYKRAKEKREK) and 1075-1104 (REKGAITIQSAWRGYDARRKLKQRSRRRSE). Disordered regions lie at residues 1093 to 1164 (RKLK…VTSG) and 1200 to 1233 (SPCEDSLKPGSEEGLSQKQRAPRRRCQQPKMLSS).

The protein in the C-terminal section; belongs to the TRAFAC class myosin-kinesin ATPase superfamily. Myosin family. In the N-terminal section; belongs to the protein kinase superfamily. STE Ser/Thr protein kinase family. As to quaternary structure, interacts (via C-terminus) with ESPN. Interacts (via C-terminus) with ESPNL. In terms of tissue distribution, expressed in the cochlear hair cells (at protein level). Expressed in utricle hair bundles (at protein level).

The protein resides in the cytoplasm. Its subcellular location is the cytoskeleton. It localises to the cell projection. It is found in the stereocilium. It catalyses the reaction L-seryl-[protein] + ATP = O-phospho-L-seryl-[protein] + ADP + H(+). The catalysed reaction is L-threonyl-[protein] + ATP = O-phospho-L-threonyl-[protein] + ADP + H(+). Probable actin-based motor with a protein kinase activity. Required for normal cochlear hair bundle development and hearing. Plays an important role in the early steps of cochlear hair bundle morphogenesis. Influences the number and lengths of stereocilia to be produced and limits the growth of microvilli within the forming auditory hair bundles thereby contributing to the architecture of the hair bundle, including its staircase pattern. Involved in the elongation of actin in stereocilia tips by transporting the actin regulatory factor ESPN to the plus ends of actin filaments. This is Myosin-IIIb (Myo3b) from Mus musculus (Mouse).